The chain runs to 378 residues: mRNA cap guanine-N(7) methyltransferase (378 aa).

The mRNA cap 0 methyltransferase domain occupies 24–331 (SRIFFMRNMN…MYLVFGFRKK (308 aa)). 33–34 (NN) is a binding site for mRNA. Residues Lys-37, Ala-62, Asp-84, Asp-116, Gln-138, and Tyr-143 each coordinate S-adenosyl-L-methionine. 2 stretches are compositionally biased toward basic and acidic residues: residues 335-347 (EKNLESEAPEIKK) and 356-378 (DTDKTAEKNEERIEEKEENPSHC). The tract at residues 335-378 (EKNLESEAPEIKKVTPVPLNEDTDKTAEKNEERIEEKEENPSHC) is disordered.

This sequence belongs to the class I-like SAM-binding methyltransferase superfamily. mRNA cap 0 methyltransferase family.

It is found in the nucleus. It catalyses the reaction a 5'-end (5'-triphosphoguanosine)-ribonucleoside in mRNA + S-adenosyl-L-methionine = a 5'-end (N(7)-methyl 5'-triphosphoguanosine)-ribonucleoside in mRNA + S-adenosyl-L-homocysteine. In terms of biological role, mRNA-capping methyltransferase that methylates the N7 position of the added guanosine to the 5'-cap structure of mRNAs. Binds RNA containing 5'-terminal GpppC. The protein is mRNA cap guanine-N(7) methyltransferase of Caenorhabditis briggsae.